Consider the following 671-residue polypeptide: UvrABC system protein B (671 aa).

The region spanning 31-189 is the Helicase ATP-binding domain; that stretch reads KGFEEGKKEQ…QLVDIQFDRN (159 aa). An ATP-binding site is contributed by 44–51; that stretch reads GATGTGKT. Positions 97-120 match the Beta-hairpin motif; it reads YYDYYQPEAYVPSTDTYIEKDSAI. A Helicase C-terminal domain is found at 437 to 599; it reads QIDDLVGEIN…ITPKTIIKPI (163 aa). Residues 634–669 enclose the UVR domain; sequence KELVANLRSQMQAAAKKLDFEQAASLRDTILELQAD.

This sequence belongs to the UvrB family. As to quaternary structure, forms a heterotetramer with UvrA during the search for lesions. Interacts with UvrC in an incision complex.

It localises to the cytoplasm. In terms of biological role, the UvrABC repair system catalyzes the recognition and processing of DNA lesions. A damage recognition complex composed of 2 UvrA and 2 UvrB subunits scans DNA for abnormalities. Upon binding of the UvrA(2)B(2) complex to a putative damaged site, the DNA wraps around one UvrB monomer. DNA wrap is dependent on ATP binding by UvrB and probably causes local melting of the DNA helix, facilitating insertion of UvrB beta-hairpin between the DNA strands. Then UvrB probes one DNA strand for the presence of a lesion. If a lesion is found the UvrA subunits dissociate and the UvrB-DNA preincision complex is formed. This complex is subsequently bound by UvrC and the second UvrB is released. If no lesion is found, the DNA wraps around the other UvrB subunit that will check the other stand for damage. In Lacticaseibacillus casei (strain BL23) (Lactobacillus casei), this protein is UvrABC system protein B.